The following is a 202-amino-acid chain: Precorrin-2 dehydrogenase (202 aa).

NAD(+) is bound by residues Thr20–Ile21 and Pro41–Thr42.

It belongs to the precorrin-2 dehydrogenase / sirohydrochlorin ferrochelatase family. In terms of assembly, homodimer.

It catalyses the reaction precorrin-2 + NAD(+) = sirohydrochlorin + NADH + 2 H(+). The protein operates within cofactor biosynthesis; adenosylcobalamin biosynthesis; sirohydrochlorin from precorrin-2: step 1/1. Its pathway is porphyrin-containing compound metabolism; siroheme biosynthesis; sirohydrochlorin from precorrin-2: step 1/1. Catalyzes the dehydrogenation of precorrin-2 to form sirohydrochlorin which is used as a precursor in both siroheme biosynthesis and in the anaerobic branch of adenosylcobalamin biosynthesis. It is unable to oxidize precorrin-3. The sequence is that of Precorrin-2 dehydrogenase (sirC) from Priestia megaterium (Bacillus megaterium).